A 41-amino-acid polypeptide reads, in one-letter code: U3-theraphotoxin-Hs1a (41 aa).

Intrachain disulfides connect C2-C16, C9-C37, and C17-C40.

This sequence belongs to the neurotoxin 14 (magi-1) family. 01 (HNTX-16) subfamily. Expressed by the venom gland.

It is found in the secreted. In terms of biological role, intracerebroventricular injection paralyzes mice. Has no effect on voltage-gated sodium currents. This chain is U3-theraphotoxin-Hs1a, found in Cyriopagopus schmidti (Chinese bird spider).